An 86-amino-acid polypeptide reads, in one-letter code: Large ribosomal subunit protein bL27 (86 aa).

Positions 1-21 (MAHHKGGGSSRNGKDSNPQYL) are disordered.

This sequence belongs to the bacterial ribosomal protein bL27 family.

The sequence is that of Large ribosomal subunit protein bL27 from Coprothermobacter proteolyticus (strain ATCC 35245 / DSM 5265 / OCM 4 / BT).